A 378-amino-acid polypeptide reads, in one-letter code: Protein-glutamate methylesterase/protein-glutamine glutaminase 2 (378 aa).

The region spanning 4–121 (KVLVVDDSGF…SRNPEKVKQL (118 aa)) is the Response regulatory domain. Residue aspartate 55 is modified to 4-aspartylphosphate. Positions 141–188 (APAPAAAPTPAPIPAAAPSSFGSHSAPARPAPAPAPTRAPAASASSPA) are disordered. Positions 145–155 (AAAPTPAPIPA) are enriched in pro residues. 2 stretches are compositionally biased toward low complexity: residues 156-168 (AAPSSFGSHSAPA) and 178-188 (RAPAASASSPA). Residues 187 to 378 (PAPKRKNYKL…IGKHIVEACV (192 aa)) form the CheB-type methylesterase domain. Catalysis depends on residues serine 202, histidine 229, and aspartate 322.

The protein belongs to the CheB family. In terms of processing, phosphorylated by CheA. Phosphorylation of the N-terminal regulatory domain activates the methylesterase activity.

Its subcellular location is the cytoplasm. It carries out the reaction [protein]-L-glutamate 5-O-methyl ester + H2O = L-glutamyl-[protein] + methanol + H(+). The catalysed reaction is L-glutaminyl-[protein] + H2O = L-glutamyl-[protein] + NH4(+). Its function is as follows. Involved in chemotaxis. Part of a chemotaxis signal transduction system that modulates chemotaxis in response to various stimuli. Catalyzes the demethylation of specific methylglutamate residues introduced into the chemoreceptors (methyl-accepting chemotaxis proteins or MCP) by CheR. Also mediates the irreversible deamidation of specific glutamine residues to glutamic acid. This chain is Protein-glutamate methylesterase/protein-glutamine glutaminase 2, found in Pseudomonas fluorescens (strain Pf0-1).